A 100-amino-acid chain; its full sequence is Large ribosomal subunit protein uL23 (100 aa).

This sequence belongs to the universal ribosomal protein uL23 family. As to quaternary structure, part of the 50S ribosomal subunit. Contacts protein L29, and trigger factor when it is bound to the ribosome.

In terms of biological role, one of the early assembly proteins it binds 23S rRNA. One of the proteins that surrounds the polypeptide exit tunnel on the outside of the ribosome. Forms the main docking site for trigger factor binding to the ribosome. This is Large ribosomal subunit protein uL23 from Shewanella denitrificans (strain OS217 / ATCC BAA-1090 / DSM 15013).